Here is a 710-residue protein sequence, read N- to C-terminus: Polyribonucleotide nucleotidyltransferase (710 aa).

2 residues coordinate Mg(2+): Asp-489 and Asp-495. The 60-residue stretch at 556-615 (PKIDTIKIDVDKIKVVIGKGGETIDKIIAETGVKIDIDDEGNVSIYSSDQAAIDRTKEII) folds into the KH domain. Positions 625-693 (GEVYHAKVIR…EKGRVDASMK (69 aa)) constitute an S1 motif domain. The tract at residues 691-710 (SMKALIPRPPKPEKKEEKHD) is disordered. Basic and acidic residues predominate over residues 700 to 710 (PKPEKKEEKHD).

It belongs to the polyribonucleotide nucleotidyltransferase family. Mg(2+) is required as a cofactor.

Its subcellular location is the cytoplasm. It catalyses the reaction RNA(n+1) + phosphate = RNA(n) + a ribonucleoside 5'-diphosphate. Its function is as follows. Involved in mRNA degradation. Catalyzes the phosphorolysis of single-stranded polyribonucleotides processively in the 3'- to 5'-direction. This chain is Polyribonucleotide nucleotidyltransferase, found in Streptococcus pyogenes serotype M18 (strain MGAS8232).